Reading from the N-terminus, the 78-residue chain is U-scoloptoxin(04)-Er1d (78 aa).

The N-terminal stretch at 1-24 (MTRHLIFAAMLLVCLFVCWNAVGA) is a signal peptide. A propeptide spanning residues 25–28 (RDAR) is cleaved from the precursor.

This sequence belongs to the scoloptoxin-04 family. Contains 2 disulfide bonds. Expressed by the venom gland.

It localises to the secreted. This is U-scoloptoxin(04)-Er1d from Ethmostigmus rubripes (Giant centipede).